Reading from the N-terminus, the 189-residue chain is Movement protein (189 aa).

Belongs to the tombusvirus/aureusvirus movement protein p22 family. Interacts with host protein HFI22. Post-translationally, phosphorylated.

It is found in the host membrane. In terms of biological role, transports viral genome to neighboring plant cells directly through plasmosdesmata, without any budding. The movement protein allows efficient cell to cell propagation, by bypassing the host cell wall barrier. The chain is Movement protein from Capsicum annuum (Capsicum pepper).